The chain runs to 545 residues: Chaperonin GroEL 2 (545 aa).

Residues 29–32 (TLGP), 86–90 (DGTTT), Gly413, 479–481 (NAA), and Asp495 contribute to the ATP site.

It belongs to the chaperonin (HSP60) family. As to quaternary structure, forms a cylinder of 14 subunits composed of two heptameric rings stacked back-to-back. Interacts with the co-chaperonin GroES.

The protein localises to the cytoplasm. It catalyses the reaction ATP + H2O + a folded polypeptide = ADP + phosphate + an unfolded polypeptide.. Together with its co-chaperonin GroES, plays an essential role in assisting protein folding. The GroEL-GroES system forms a nano-cage that allows encapsulation of the non-native substrate proteins and provides a physical environment optimized to promote and accelerate protein folding. The chain is Chaperonin GroEL 2 from Prochlorococcus marinus (strain AS9601).